The chain runs to 287 residues: Energy-coupling factor transporter ATP-binding protein EcfA1 (287 aa).

Positions 6 to 248 constitute an ABC transporter domain; sequence IVAEGVSYAY…ADRIRALRLD (243 aa). 47-54 is a binding site for ATP; sequence GMNGSGKS.

It belongs to the ABC transporter superfamily. Energy-coupling factor EcfA family. As to quaternary structure, forms a stable energy-coupling factor (ECF) transporter complex composed of 2 membrane-embedded substrate-binding proteins (S component), 2 ATP-binding proteins (A component) and 2 transmembrane proteins (T component).

It is found in the cell membrane. In terms of biological role, ATP-binding (A) component of a common energy-coupling factor (ECF) ABC-transporter complex. Unlike classic ABC transporters this ECF transporter provides the energy necessary to transport a number of different substrates. The sequence is that of Energy-coupling factor transporter ATP-binding protein EcfA1 from Symbiobacterium thermophilum (strain DSM 24528 / JCM 14929 / IAM 14863 / T).